A 334-amino-acid chain; its full sequence is GTPase Obg (334 aa).

The Obg domain occupies 1–159 (MRFVDEVVIK…KEVRLELNLL (159 aa)). Positions 160–331 (ADVALLGLPN…LAKKLNEFLQ (172 aa)) constitute an OBG-type G domain. GTP is bound by residues 166-173 (GLPNAGKS), 191-195 (FTTMY), 212-215 (DIPG), 282-285 (NKID), and 312-314 (SAA). Mg(2+) contacts are provided by Ser-173 and Thr-193.

It belongs to the TRAFAC class OBG-HflX-like GTPase superfamily. OBG GTPase family. Monomer. Mg(2+) serves as cofactor.

The protein resides in the cytoplasm. An essential GTPase which binds GTP, GDP and possibly (p)ppGpp with moderate affinity, with high nucleotide exchange rates and a fairly low GTP hydrolysis rate. Plays a role in control of the cell cycle, stress response, ribosome biogenesis and in those bacteria that undergo differentiation, in morphogenesis control. The sequence is that of GTPase Obg from Francisella tularensis subsp. tularensis (strain FSC 198).